Reading from the N-terminus, the 351-residue chain is UDP-N-acetylglucosamine--N-acetylmuramyl-(pentapeptide) pyrophosphoryl-undecaprenol N-acetylglucosamine transferase (351 aa).

Residues 12–14 (TGG), Asn-124, Arg-160, Ser-188, Ile-239, 258–263 (ALTVCE), and Gln-283 contribute to the UDP-N-acetyl-alpha-D-glucosamine site.

Belongs to the glycosyltransferase 28 family. MurG subfamily.

It is found in the cell inner membrane. The enzyme catalyses di-trans,octa-cis-undecaprenyl diphospho-N-acetyl-alpha-D-muramoyl-L-alanyl-D-glutamyl-meso-2,6-diaminopimeloyl-D-alanyl-D-alanine + UDP-N-acetyl-alpha-D-glucosamine = di-trans,octa-cis-undecaprenyl diphospho-[N-acetyl-alpha-D-glucosaminyl-(1-&gt;4)]-N-acetyl-alpha-D-muramoyl-L-alanyl-D-glutamyl-meso-2,6-diaminopimeloyl-D-alanyl-D-alanine + UDP + H(+). Its pathway is cell wall biogenesis; peptidoglycan biosynthesis. Its function is as follows. Cell wall formation. Catalyzes the transfer of a GlcNAc subunit on undecaprenyl-pyrophosphoryl-MurNAc-pentapeptide (lipid intermediate I) to form undecaprenyl-pyrophosphoryl-MurNAc-(pentapeptide)GlcNAc (lipid intermediate II). The sequence is that of UDP-N-acetylglucosamine--N-acetylmuramyl-(pentapeptide) pyrophosphoryl-undecaprenol N-acetylglucosamine transferase from Glaesserella parasuis serovar 5 (strain SH0165) (Haemophilus parasuis).